The primary structure comprises 136 residues: Ribonuclease P protein component (136 aa).

It belongs to the RnpA family. In terms of assembly, consists of a catalytic RNA component (M1 or rnpB) and a protein subunit.

It catalyses the reaction Endonucleolytic cleavage of RNA, removing 5'-extranucleotides from tRNA precursor.. In terms of biological role, RNaseP catalyzes the removal of the 5'-leader sequence from pre-tRNA to produce the mature 5'-terminus. It can also cleave other RNA substrates such as 4.5S RNA. The protein component plays an auxiliary but essential role in vivo by binding to the 5'-leader sequence and broadening the substrate specificity of the ribozyme. This Arthrobacter sp. (strain FB24) protein is Ribonuclease P protein component.